The sequence spans 397 residues: S-adenosylmethionine synthase (397 aa).

ATP is bound at residue His-15. Asp-17 lines the Mg(2+) pocket. Glu-43 serves as a coordination point for K(+). Positions 56 and 99 each coordinate L-methionine. Positions 99-109 are flexible loop; the sequence is QSGDIAMGVDE. Residues 175-177, 241-242, Asp-250, 256-257, Ala-273, and Lys-277 each bind ATP; these read DGK, RF, and RK. Asp-250 is an L-methionine binding site. Lys-281 contacts L-methionine.

The protein belongs to the AdoMet synthase family. In terms of assembly, homotetramer; dimer of dimers. The cofactor is Mg(2+). It depends on K(+) as a cofactor.

It is found in the cytoplasm. The enzyme catalyses L-methionine + ATP + H2O = S-adenosyl-L-methionine + phosphate + diphosphate. The protein operates within amino-acid biosynthesis; S-adenosyl-L-methionine biosynthesis; S-adenosyl-L-methionine from L-methionine: step 1/1. In terms of biological role, catalyzes the formation of S-adenosylmethionine (AdoMet) from methionine and ATP. The overall synthetic reaction is composed of two sequential steps, AdoMet formation and the subsequent tripolyphosphate hydrolysis which occurs prior to release of AdoMet from the enzyme. In Clostridioides difficile (strain 630) (Peptoclostridium difficile), this protein is S-adenosylmethionine synthase.